The primary structure comprises 293 residues: Probable E3 ubiquitin-protein ligase RNF144A-A (293 aa).

The tract at residues 16–237 (PLVSCKLCLG…YDKGPCRNKL (222 aa)) is TRIAD supradomain. Zn(2+) contacts are provided by Cys20, Cys23, Cys43, Cys46, Cys111, Cys116, Cys135, Cys138, Cys143, Cys146, His151, Cys156, Cys186, and Cys189. An RING-type 1 zinc finger spans residues 20-70 (CKLCLGEFPLEQMTTITQCQCVFCTMCLKQYVELLIKEGFETAISCPDSAC). The segment at 91 to 156 (QRYRKLQFEK…KASWHPDQDC (66 aa)) adopts an IBR-type zinc-finger fold. The RING-type 2; atypical zinc-finger motif lies at 186-215 (CPKCKVYIERDEGCAQMMCKNCKHAFCWYC). Residue Cys199 is part of the active site. The Zn(2+) site is built by Cys204, Cys207, Cys212, Cys215, His227, and Cys233. A helical membrane pass occupies residues 251–271 (VVGIFAGFGLLLLVASPFLLL).

The protein belongs to the RBR family. RNF144 subfamily.

It localises to the membrane. It carries out the reaction [E2 ubiquitin-conjugating enzyme]-S-ubiquitinyl-L-cysteine + [acceptor protein]-L-lysine = [E2 ubiquitin-conjugating enzyme]-L-cysteine + [acceptor protein]-N(6)-ubiquitinyl-L-lysine.. It participates in protein modification; protein ubiquitination. Functionally, E3 ubiquitin-protein ligase which accepts ubiquitin from E2 ubiquitin-conjugating enzymes ube2l3 and ube2l6 in the form of a thioester and then directly transfers the ubiquitin to targeted substrates. This Danio rerio (Zebrafish) protein is Probable E3 ubiquitin-protein ligase RNF144A-A (rnf144aa).